Reading from the N-terminus, the 876-residue chain is Nitrogen regulatory protein areA (876 aa).

The segment covering 1 to 11 has biased composition (gly residues); that stretch reads MSGLTLGGGSG. Disordered stretches follow at residues 1-65, 137-159, 192-248, 393-413, 451-498, and 573-672; these read MSGL…PTDS, QERERAQQQARASSQKSPVPGMS, IPFS…ESEF, FSPPPSGYQSTASTPQPAYDG, YMYN…PNEF, and SADM…GPTT. Polar residues-rich tracts occupy residues 198-211, 399-408, and 455-480; these read DHPSPSTTKASEAT, GYQSTASTPQ, and QGGSSQDITQQNAHMGAQSSSMQSPG. The segment covering 602–611 has biased composition (basic and acidic residues); that stretch reads VRNRDQDPRR. Polar residues predominate over residues 615 to 640; it reads ARTSSTPNTAQLLRQSMQNQSSHTSP. Residues 673 to 697 form a GATA-type zinc finger; that stretch reads CTNCFTQTTPLWRRNPEGQPLCNAC. Residues 721-742 constitute a DNA-binding region (H-T-H motif); that stretch reads NRNSANSLAVGSSRVSKKSARK. 2 stretches are compositionally biased toward polar residues: residues 724-734 and 742-766; these read SANSLAVGSSR and KNSVQQVTPTAPTSSRAQSNTTSES. A disordered region spans residues 724–856; it reads SANSLAVGSS…MPPAAVNPAN (133 aa). 2 stretches are compositionally biased toward low complexity: residues 782-798 and 828-855; these read PIAAAPPKSSSAATTSP and SPSSTSSGGRSKVVPLAPAMPPAAVNPA.

As to quaternary structure, interacts with nmrA.

Its subcellular location is the nucleus. Transcription activator that binds the consensus DNA element 5'-CGATAG-3' and mediates nitrogen metabolite repression. Activates the transcription of uapA. This is Nitrogen regulatory protein areA (areA) from Emericella nidulans (strain FGSC A4 / ATCC 38163 / CBS 112.46 / NRRL 194 / M139) (Aspergillus nidulans).